A 548-amino-acid chain; its full sequence is Aspergilol synthase AuAP450 (548 aa).

The helical transmembrane segment at Pro38–Ser58 threads the bilayer. Residue Cys489 coordinates heme.

It belongs to the cytochrome P450 family. It depends on heme as a cofactor.

The protein resides in the membrane. It functions in the pathway secondary metabolite biosynthesis; terpenoid biosynthesis. In terms of biological role, cytochrome P450 monooxygenase; part of the gene cluster that mediates the biosynthesis of aspergiltriene A, aspergildienes A-D and aspergilols A-D. The bifunctional terpene synthase AuAS converts DMAPP and IPP into sesterterpenes. The C-terminal prenyltransferase (PT) domain of AuAS catalyzes formation of GFPP, whereas the N-terminal terpene cyclase (TC) domain catalyzes the cyclization of GFPP into 5 distinct sesterterpenes: aspergiltriene A, aspergildiene A, aspergildiene B, aspergildiene C and aspergildiene D. The cytochrome P450 monooxygenase AP450 then hydroxylates the aspergildienes A, B, C and D to yield the corresponding sesterterpene alcohols, aspergilols A-D. The polypeptide is Aspergilol synthase AuAP450 (Aspergillus ustus).